A 207-amino-acid polypeptide reads, in one-letter code: MIIIAYLLGSIQTGLWIGKYFYQVNLRQHGSGNTGTTNTFRILGVKAGIVTLTIDILKGTLATLIPIILGITTISPFFIGFFAIIGHTFPIFAQFKGGKAVATSAGVLLGFAPSFFLYLLVIFLLTLYLFSMISLSSITVAVVGILSVLIFPLVGFILTDYDWIFTTVVILMALTIIIRHQDNIKRIRKRQENLVPFGLNLSKQKNK.

Transmembrane regions (helical) follow at residues 1–21 (MIII…GKYF), 42–62 (ILGV…GTLA), 65–85 (IPII…FAII), 105–125 (AGVL…IFLL), 138–158 (ITVA…GFIL), and 159–179 (TDYD…IIIR).

This sequence belongs to the PlsY family. As to quaternary structure, probably interacts with PlsX.

Its subcellular location is the cell membrane. It carries out the reaction an acyl phosphate + sn-glycerol 3-phosphate = a 1-acyl-sn-glycero-3-phosphate + phosphate. The protein operates within lipid metabolism; phospholipid metabolism. Its function is as follows. Catalyzes the transfer of an acyl group from acyl-phosphate (acyl-PO(4)) to glycerol-3-phosphate (G3P) to form lysophosphatidic acid (LPA). This enzyme utilizes acyl-phosphate as fatty acyl donor, but not acyl-CoA or acyl-ACP. The polypeptide is Glycerol-3-phosphate acyltransferase (Streptococcus agalactiae serotype Ia (strain ATCC 27591 / A909 / CDC SS700)).